Consider the following 461-residue polypeptide: Mannose-6-phosphate isomerase (461 aa).

4 residues coordinate Zn(2+): Gln-107, His-109, Glu-134, and His-291. The active site involves Arg-310.

Belongs to the mannose-6-phosphate isomerase type 1 family. Zn(2+) is required as a cofactor.

The protein resides in the cytoplasm. The enzyme catalyses D-mannose 6-phosphate = D-fructose 6-phosphate. The protein operates within nucleotide-sugar biosynthesis; GDP-alpha-D-mannose biosynthesis; alpha-D-mannose 1-phosphate from D-fructose 6-phosphate: step 1/2. Functionally, involved in the synthesis of the GDP-mannose and dolichol-phosphate-mannose required for a number of critical mannosyl transfer reactions. This chain is Mannose-6-phosphate isomerase (manA), found in Emericella nidulans (strain FGSC A4 / ATCC 38163 / CBS 112.46 / NRRL 194 / M139) (Aspergillus nidulans).